The chain runs to 593 residues: Cytochrome c oxidase polypeptide 1 (593 aa).

The next 2 helical transmembrane spans lie at 5–25 and 71–91; these read ASSI…VAVL and IGIL…VSVL. His-117 contributes to the Fe(II)-heme a binding site. 6 helical membrane passes run 122 to 142, 154 to 174, 204 to 224, 246 to 266, 288 to 308, and 320 to 340; these read LFLF…PLLI, AIAF…FLIP, GLHL…ATIF, QSGL…MLLL, LFWF…MGIV, and LFGF…SFGV. Cu cation-binding residues include His-294 and Tyr-298. The 1'-histidyl-3'-tyrosine (His-Tyr) cross-link spans 294–298; sequence HPEVY. Positions 343 and 344 each coordinate Cu cation. Helical transmembrane passes span 358 to 378, 401 to 421, 425 to 445, 467 to 487, and 506 to 526; these read FMAV…NWIT, FIIG…LILH, YVVG…LFAA, FWTA…LGYG, and LATV…FNMA. Heme a3 is bound at residue His-429. Fe(II)-heme a is bound at residue His-431. The interval 562–593 is disordered; it reads TTVLPDGGDEAQSEADAVTDGGQPAADSDTES.

Belongs to the heme-copper respiratory oxidase family.

Its subcellular location is the cell membrane. It catalyses the reaction 4 Fe(II)-[cytochrome c] + O2 + 8 H(+)(in) = 4 Fe(III)-[cytochrome c] + 2 H2O + 4 H(+)(out). It functions in the pathway energy metabolism; oxidative phosphorylation. Functionally, cytochrome c oxidase is the component of the respiratory chain that catalyzes the reduction of oxygen to water. Subunits 1-3 form the functional core of the enzyme complex. CO I is the catalytic subunit of the enzyme. Electrons originating in cytochrome c are transferred via the copper A center of subunit 2 and heme A of subunit 1 to the bimetallic center formed by heme A3 and copper B. The polypeptide is Cytochrome c oxidase polypeptide 1 (coxA2) (Halobacterium salinarum (strain ATCC 700922 / JCM 11081 / NRC-1) (Halobacterium halobium)).